Here is a 151-residue protein sequence, read N- to C-terminus: Melatonin receptor type 1C (151 aa).

Topologically, residues Cys-1–Arg-13 are cytoplasmic. Residues Asn-14–Phe-34 traverse the membrane as a helical segment. At Leu-35–Tyr-58 the chain is on the extracellular side. Residues Thr-59–Leu-79 form a helical membrane-spanning segment. At Arg-80–Met-109 the chain is on the cytoplasmic side. The helical transmembrane segment at Phe-110 to Val-130 threads the bilayer. The Extracellular segment spans residues Ala-131–Glu-143. The chain crosses the membrane as a helical span at residues Trp-144–Phe-151.

The protein belongs to the G-protein coupled receptor 1 family.

It localises to the cell membrane. Functionally, high affinity receptor for melatonin. The activity of this receptor is mediated by pertussis toxin sensitive G proteins that inhibits adenylate cyclase activity. This chain is Melatonin receptor type 1C (mtnr1c), found in Danio rerio (Zebrafish).